Here is a 2102-residue protein sequence, read N- to C-terminus: MSSCFVPNGASLEDCHSNLFCLADLTGIKWKCFVWQGPTSSPILFPVTEEDPILCSFSRCLKADVLSVWRRHQTPGRRELWIFWWGDDPNFAELVHHDLSCNEDGSWESGLTYECRTLLFKAIHNLLERCLMNRSFVRIGKWFVKPYEKDEKPINKSEHLSCSFTFFVHGDSNVCTSVEINQHQPVYLLSEEHLTLAQQSSSSVQVILSPYGLSGTLTGQSFKLSDPPTQKLIEEWKQFYPIGPNTKEVTDDKMDDLDWEDDSLAAVEVVVAGVRMVYPASLVLVAQSDIPLVATVSSSSSSGSYAGAPHNQLVHGDTGISSVTLTPPTSPEEAQAVSQPAQKWVKLSAMSGVFSVDSSSHHGGKIPRRLASQMVERVWQECNINRAQNKRKFSTMSNGVCEEETDKASVWDFVESSQRSQCSCSRLKNQKQRACSTPGHPPSAGQPPQPSTKHKMAEKLEKGDKQQKRPLTPFHHRSSLCEEQPSLEQGESVHRLCLQGHEDSRYPSLHHADVTSSKTPMLHSSADEMAGSPQPPPLSPHPCERMEEPADGMKSSSSPLHQHFYPPSSEPCLEPQKPPDESTLDPLPLPCPPPYPETLEATIYVGSAINPNEDTTHNPWKYFRVPGGRNSDFHTPHLPVVAHFEDGNRTGGQDGIVSITEMMSSSKRPLKVSEELVKMYEHKKNQYLSSAVCDEDPEQESDPYAFEEGDEEFNFSDKDKKSGPEREAGKKAKREDGSSSSDDAQGSGGSKPLPTTSLIHETDLVVSINDLDNLFNSDEDDLTQPGSRRAAGGAEEKFGGKEPKPAAPDPLPCCADLHQMFPTPPSLDQGYSPINMGNTESAAGLSLLDGAMSGNFKMEVEEGFCSPKPSEIKDFSYVFKPESCQALIGCSLYAPLKTLPSQCLLPVKLPEECVYRPSWTVGKLGMLQPMAAMTFLNKDSNIPSVGSVVEQEQSCTPQTHNTFMSNSAPPSNSGAGILPSPATPRISAPTPRTPRTPRTPRGPASVQGSLKYENSDLNSPASTPSTCRPLSSVEPATVPSIPEAHSLYVTLILSESVMNLFKDCNFDSCCICVCNMNITGADVGIYISDPNMDSQYSSMDPCSCGFSAVMNRRYGNGAGLFLEDELDIMGRGSDAAREIEKHFEAVRAASLKRGTVLEEQVPDDLMLLLQDLCTNPFSPIIRPDLLGTVIKSPIRLEERDYYSDCYMALEHGRQFMDNMSGGKVDETLVKSSSLHHWAKRNAFDMSMLFSQDVLRMLLSLQPVLQDTIQKKRSVRSWGVQGPLTWQQFHKMAGRGSYGTDESPEPLPIPTLLVGYEYDYVVLSPFALPYWEKLLLDPYSSQRDVGYMVVCPDNEALLNGAKTFFRDLTAVYESCRLGQHRPIAKSHADGIVTVSDAGSKALTDQTLIDWLPKTINSSSSSEALNKLKLYAHVCRHDLASCLASQSLDGSLLTQRNPASSSQTSSSSSPVTTAQNVTPTTNSNSNTNTNTTPTSTSTSSSSSSCPQGVGNMPSSKPNTIPPFGAQGLQSSQQSGGQSAGTLGDATSATSQPQVPSEPAESTMEREKVGVPTDGDSHAVTYPPAIVIYIVNPFSYEENCQGSSSSVWTIALLRCYLEMLQLLPPHIRNAVYVQIIPSQYLLQPVWSEERHIYAQHLKSLAFSVYTQCRRRLPTSTNVKTLTGFGPGLAIDTALQSKERPQCLHLYAPPFVLAPVKDKQTELGETFGEAAQKYNVLFVAYCLSHDQRWLLASCTDQYGELLETCVISIDVPNRARRKKGSARRQGLQKLWEWCLDLVQMTSLPWRIVIGRLGRIGHGELRDWSILLSRRNLQSLGRRLKEMCRMCGISAADSPSILSTCLVAMEPQASFVIMPDSVSTGSVFGRSTTLNMQTSQLNTPQDTSCTHILVFPTSAGLQAFSDVTDGMGGMDGILDLFAENDLVDPDLINIIPNSPTTSPVHSPGSHYHHGGDGSKGQGTDRMESHDESPNILQQPMALGYFVSTAKAGPLPDWFWSSCPQAKNQCPLFLKASLHLNVSSVQSDELLHSKHSHPLDSSHTSDVLRFVLEQYNALSWLTCDPATQDRRSCLPVHFVVLNQMYNFIMNML.

Disordered stretches follow at residues S304–Q335, Q432–L487, V514–L587, S689–L758, N776–Q819, and S947–E1034. The span at G439 to P450 shows a compositional bias: pro residues. A compositionally biased stretch (basic and acidic residues) spans K455–Q467. Over residues C693–N714 the composition is skewed to acidic residues. Basic and acidic residues-rich tracts occupy residues F715–G737 and A794–K804. Over residues S947–G974 the composition is skewed to polar residues. Residues P979 to T990 are compositionally biased toward low complexity. The span at S1015–P1029 shows a compositional bias: polar residues. 2 short sequence motifs (LXXLL motif) span residues L1165–L1169 and L1254–L1258. Disordered stretches follow at residues L1451–S1574 and N1948–S1983. Composition is skewed to low complexity over residues S1458–S1467, T1476–S1502, and G1522–G1538. Positions D1542–V1552 are enriched in polar residues. Basic and acidic residues predominate over residues G1973–S1983.

The protein belongs to the Mediator complex subunit 13 family. Component of the Mediator complex.

It is found in the nucleus. Its function is as follows. Component of the Mediator complex, a coactivator involved in regulated gene transcription of nearly all RNA polymerase II-dependent genes. Mediator functions as a bridge to convey information from gene-specific regulatory proteins to the basal RNA polymerase II transcription machinery. Mediator is recruited to promoters by direct interactions with regulatory proteins and serves as a scaffold for the assembly of a functional preinitiation complex with RNA polymerase II and the general transcription factors. In Danio rerio (Zebrafish), this protein is Mediator of RNA polymerase II transcription subunit 13-like.